The following is a 486-amino-acid chain: Zinc finger chaperone ZPR1 (486 aa).

Residues 1–31 form a disordered region; it reads MSEQKEDLFKPVGEAAAEVEDESIAEQNKAN. Ser-23 bears the Phosphoserine mark. 2 C4-type zinc fingers span residues 54 to 86 and 295 to 327; these read CMNCGKNGTTRLLLTSIPYFREIIIMSFDCPHC and CPSCTQECETHMKPVNIPHFKEVIIMSTVCDHC. At Thr-407 the chain carries Phosphothreonine.

The protein belongs to the ZPR1 family. Interacts with elongation factor 1-alpha.

The protein localises to the cytoplasm. Its subcellular location is the nucleus. Acts as a protein folding chaperone for elongation factor 1-alpha. The chain is Zinc finger chaperone ZPR1 from Saccharomyces cerevisiae (strain ATCC 204508 / S288c) (Baker's yeast).